Reading from the N-terminus, the 953-residue chain is Protein translocase subunit SecA 1 (953 aa).

ATP contacts are provided by residues Gln-83, 101-105 (GEGKT), and Asp-490. The span at 854 to 867 (AAAAAAKASDSAAK) shows a compositional bias: low complexity. Residues 854-953 (AAAAAAKASD…DRPAKSHRKG (100 aa)) are disordered. A compositionally biased stretch (basic and acidic residues) spans 929–947 (SRRERREAARKQAKADRPA).

Belongs to the SecA family. Monomer and homodimer. Part of the essential Sec protein translocation apparatus which comprises SecA, SecYEG and auxiliary proteins SecDF. Other proteins may also be involved.

It is found in the cell membrane. It localises to the cytoplasm. The catalysed reaction is ATP + H2O + cellular proteinSide 1 = ADP + phosphate + cellular proteinSide 2.. Functionally, part of the Sec protein translocase complex. Interacts with the SecYEG preprotein conducting channel. Has a central role in coupling the hydrolysis of ATP to the transfer of proteins into and across the cell membrane, serving as an ATP-driven molecular motor driving the stepwise translocation of polypeptide chains across the membrane. This chain is Protein translocase subunit SecA 1, found in Mycolicibacterium smegmatis (strain ATCC 700084 / mc(2)155) (Mycobacterium smegmatis).